The following is a 200-amino-acid chain: Mediator of RNA polymerase II transcription subunit 29 (200 aa).

Composition is skewed to low complexity over residues 1 to 21 (MAAS…SGPS) and 36 to 48 (AQLV…GLLQ). Residues 1 to 48 (MAASQQQASAASSAAGVSGPSSAGGPGPQQQPQPPAQLVGPAQSGLLQ) form a disordered region. An N-acetylalanine modification is found at alanine 2.

This sequence belongs to the Mediator complex subunit 29 family. Component of the Mediator complex, which is composed of MED1, MED4, MED6, MED7, MED8, MED9, MED10, MED11, MED12, MED13, MED13L, MED14, MED15, MED16, MED17, MED18, MED19, MED20, MED21, MED22, MED23, MED24, MED25, MED26, MED27, MED29, MED30, MED31, CCNC, CDK8 and CDC2L6/CDK11. The MED12, MED13, CCNC and CDK8 subunits form a distinct module termed the CDK8 module. Mediator containing the CDK8 module is less active than Mediator lacking this module in supporting transcriptional activation. Individual preparations of the Mediator complex lacking one or more distinct subunits have been variously termed ARC, CRSP, DRIP, PC2, SMCC and TRAP. Associates with the MED18/MED20 heteromer.

It localises to the nucleus. Functionally, component of the Mediator complex, a coactivator involved in the regulated transcription of nearly all RNA polymerase II-dependent genes. Mediator functions as a bridge to convey information from gene-specific regulatory proteins to the basal RNA polymerase II transcription machinery. Mediator is recruited to promoters by direct interactions with regulatory proteins and serves as a scaffold for the assembly of a functional preinitiation complex with RNA polymerase II and the general transcription factors. This is Mediator of RNA polymerase II transcription subunit 29 (MED29) from Pongo abelii (Sumatran orangutan).